The following is a 318-amino-acid chain: 4-hydroxy-3-methylbut-2-enyl diphosphate reductase (318 aa).

Cysteine 12 is a [4Fe-4S] cluster binding site. (2E)-4-hydroxy-3-methylbut-2-enyl diphosphate contacts are provided by histidine 41 and histidine 74. Dimethylallyl diphosphate-binding residues include histidine 41 and histidine 74. Positions 41 and 74 each coordinate isopentenyl diphosphate. Cysteine 96 lines the [4Fe-4S] cluster pocket. Histidine 124 serves as a coordination point for (2E)-4-hydroxy-3-methylbut-2-enyl diphosphate. Histidine 124 is a binding site for dimethylallyl diphosphate. Residue histidine 124 participates in isopentenyl diphosphate binding. Glutamate 126 functions as the Proton donor in the catalytic mechanism. Position 167 (threonine 167) interacts with (2E)-4-hydroxy-3-methylbut-2-enyl diphosphate. Cysteine 197 provides a ligand contact to [4Fe-4S] cluster. (2E)-4-hydroxy-3-methylbut-2-enyl diphosphate is bound by residues serine 225, serine 226, asparagine 227, and serine 269. The dimethylallyl diphosphate site is built by serine 225, serine 226, asparagine 227, and serine 269. Residues serine 225, serine 226, asparagine 227, and serine 269 each contribute to the isopentenyl diphosphate site.

The protein belongs to the IspH family. [4Fe-4S] cluster is required as a cofactor.

It carries out the reaction isopentenyl diphosphate + 2 oxidized [2Fe-2S]-[ferredoxin] + H2O = (2E)-4-hydroxy-3-methylbut-2-enyl diphosphate + 2 reduced [2Fe-2S]-[ferredoxin] + 2 H(+). The catalysed reaction is dimethylallyl diphosphate + 2 oxidized [2Fe-2S]-[ferredoxin] + H2O = (2E)-4-hydroxy-3-methylbut-2-enyl diphosphate + 2 reduced [2Fe-2S]-[ferredoxin] + 2 H(+). Its pathway is isoprenoid biosynthesis; dimethylallyl diphosphate biosynthesis; dimethylallyl diphosphate from (2E)-4-hydroxy-3-methylbutenyl diphosphate: step 1/1. It participates in isoprenoid biosynthesis; isopentenyl diphosphate biosynthesis via DXP pathway; isopentenyl diphosphate from 1-deoxy-D-xylulose 5-phosphate: step 6/6. Functionally, catalyzes the conversion of 1-hydroxy-2-methyl-2-(E)-butenyl 4-diphosphate (HMBPP) into a mixture of isopentenyl diphosphate (IPP) and dimethylallyl diphosphate (DMAPP). Acts in the terminal step of the DOXP/MEP pathway for isoprenoid precursor biosynthesis. The polypeptide is 4-hydroxy-3-methylbut-2-enyl diphosphate reductase (Francisella tularensis subsp. mediasiatica (strain FSC147)).